A 331-amino-acid chain; its full sequence is Beta-hexosaminidase (331 aa).

Residues Asp-60, Arg-68, Arg-133, and Lys-163 to His-164 each bind substrate. Residue His-176 is the Proton donor/acceptor of the active site. The Nucleophile role is filled by Asp-247.

The protein belongs to the glycosyl hydrolase 3 family. NagZ subfamily.

The protein resides in the cytoplasm. The catalysed reaction is Hydrolysis of terminal non-reducing N-acetyl-D-hexosamine residues in N-acetyl-beta-D-hexosaminides.. It participates in cell wall biogenesis; peptidoglycan recycling. Its function is as follows. Plays a role in peptidoglycan recycling by cleaving the terminal beta-1,4-linked N-acetylglucosamine (GlcNAc) from peptide-linked peptidoglycan fragments, giving rise to free GlcNAc, anhydro-N-acetylmuramic acid and anhydro-N-acetylmuramic acid-linked peptides. This Xanthomonas campestris pv. campestris (strain B100) protein is Beta-hexosaminidase.